The primary structure comprises 171 residues: I (171 aa).

Disordered regions lie at residues 57 to 100 (IQYP…LFAQ) and 143 to 171 (PRTSTPVTEFKRGGGRERLPKARQSKRRA). Positions 151–162 (EFKRGGGRERLP) are enriched in basic and acidic residues.

The protein belongs to the Orthorubulavirus I protein family.

In Mumps virus genotype N (strain L-Zagreb vaccine) (MuV), this protein is I.